We begin with the raw amino-acid sequence, 549 residues long: Glucose-6-phosphate isomerase (549 aa).

Glu-353 (proton donor) is an active-site residue. Active-site residues include His-384 and Lys-513.

This sequence belongs to the GPI family.

The protein resides in the cytoplasm. It carries out the reaction alpha-D-glucose 6-phosphate = beta-D-fructose 6-phosphate. The protein operates within carbohydrate biosynthesis; gluconeogenesis. Its pathway is carbohydrate degradation; glycolysis; D-glyceraldehyde 3-phosphate and glycerone phosphate from D-glucose: step 2/4. Functionally, catalyzes the reversible isomerization of glucose-6-phosphate to fructose-6-phosphate. In Brucella suis (strain ATCC 23445 / NCTC 10510), this protein is Glucose-6-phosphate isomerase.